The chain runs to 135 residues: Large-conductance mechanosensitive channel (135 aa).

2 consecutive transmembrane segments (helical) span residues 10 to 30 and 76 to 96; these read FAMRGNVIDMAVGVVIGGAFG and GSFIQTMVDFLIIAFCIFCVI.

It belongs to the MscL family. In terms of assembly, homopentamer.

It is found in the cell inner membrane. In terms of biological role, channel that opens in response to stretch forces in the membrane lipid bilayer. May participate in the regulation of osmotic pressure changes within the cell. This Campylobacter concisus (strain 13826) protein is Large-conductance mechanosensitive channel.